A 213-amino-acid chain; its full sequence is LexA repressor (213 aa).

The segment at residues 29–49 (VREICNAVGFKSTSTVHSYLE) is a DNA-binding region (H-T-H motif). Catalysis depends on for autocatalytic cleavage activity residues Ser136 and Lys173.

It belongs to the peptidase S24 family. As to quaternary structure, homodimer.

It catalyses the reaction Hydrolysis of Ala-|-Gly bond in repressor LexA.. Represses a number of genes involved in the response to DNA damage (SOS response), including recA and lexA. In the presence of single-stranded DNA, RecA interacts with LexA causing an autocatalytic cleavage which disrupts the DNA-binding part of LexA, leading to derepression of the SOS regulon and eventually DNA repair. The chain is LexA repressor from Acetivibrio thermocellus (strain ATCC 27405 / DSM 1237 / JCM 9322 / NBRC 103400 / NCIMB 10682 / NRRL B-4536 / VPI 7372) (Clostridium thermocellum).